Reading from the N-terminus, the 488-residue chain is Germacrene A hydroxylase (488 aa).

Topologically, residues 1-6 are cytoplasmic; that stretch reads MEVSLT. A helical; Signal-anchor for type II membrane protein membrane pass occupies residues 7–23; the sequence is TSIALATIVFFLYKLLT. Over 24-488 the chain is Lumenal; sequence RPTSSKNRLP…KTELMLVPSF (465 aa). Asparagine 169, asparagine 260, asparagine 379, and asparagine 412 each carry an N-linked (GlcNAc...) asparagine glycan. Residue cysteine 432 coordinates heme.

The protein belongs to the cytochrome P450 family. Requires heme as cofactor. As to expression, expressed in leaf primordia.

It localises to the endoplasmic reticulum membrane. It catalyses the reaction (+)-(R)-germacrene A + 3 reduced [NADPH--hemoprotein reductase] + 3 O2 = germacra-1(10),4,11(13)-trien-12-oate + 3 oxidized [NADPH--hemoprotein reductase] + 4 H2O + 4 H(+). It functions in the pathway secondary metabolite biosynthesis; terpenoid biosynthesis. In terms of biological role, involved in the biosynthesis of germacrene-derived sesquiterpene lactones. Catalyzes three consecutive oxidations of germacrene A to produce germacrene A acid. Could also catalyze the three-step oxidation of non-natural substrate amorphadiene to artemisinic acid. The sequence is that of Germacrene A hydroxylase from Helianthus annuus (Common sunflower).